The sequence spans 203 residues: Endo-type membrane-bound lytic murein transglycosylase A (203 aa).

The N-terminal stretch at M1–G15 is a signal peptide. C16 carries N-palmitoyl cysteine lipidation. C16 carries the S-diacylglycerol cysteine lipid modification.

This sequence belongs to the transglycosylase Slt family.

It localises to the cell outer membrane. It catalyses the reaction Endolytic cleavage of the (1-&gt;4)-beta-glycosidic linkage between N-acetylmuramic acid (MurNAc) and N-acetylglucosamine (GlcNAc) residues in peptidoglycan with concomitant formation of a 1,6-anhydrobond in the MurNAc residue.. Functionally, murein-degrading enzyme. May play a role in recycling of muropeptides during cell elongation and/or cell division. Preferentially cleaves at a distance of more than two disaccharide units from the ends of the glycan chain. The sequence is that of Endo-type membrane-bound lytic murein transglycosylase A from Escherichia coli O1:K1 / APEC.